Consider the following 363-residue polypeptide: GDP-fucose transporter (363 aa).

8 helical membrane-spanning segments follow: residues 30-47 (VITA…LVFL), 62-79 (FITW…LFLS), 126-148 (VSFY…YLIL), 152-171 (TSGQ…LLGV), 180-202 (LSYT…AIYT), 222-244 (LNAL…VFYF), 251-273 (TFWI…TGWQ), and 307-326 (LLWW…YTYV). The disordered stretch occupies residues 334-363 (KNSGASPASEAKSDKVKLLGRDGNAAEESV). Residues 344–353 (AKSDKVKLLG) show a composition bias toward basic and acidic residues.

It belongs to the TPT transporter family. SLC35C subfamily.

Its subcellular location is the golgi apparatus membrane. Involved in GDP-fucose import from the cytoplasm into the Golgi lumen. This Caenorhabditis elegans protein is GDP-fucose transporter.